The following is a 389-amino-acid chain: Tryptophan synthase beta chain (389 aa).

The residue at position 84 (lysine 84) is an N6-(pyridoxal phosphate)lysine.

The protein belongs to the TrpB family. As to quaternary structure, tetramer of two alpha and two beta chains. Requires pyridoxal 5'-phosphate as cofactor.

It carries out the reaction (1S,2R)-1-C-(indol-3-yl)glycerol 3-phosphate + L-serine = D-glyceraldehyde 3-phosphate + L-tryptophan + H2O. Its pathway is amino-acid biosynthesis; L-tryptophan biosynthesis; L-tryptophan from chorismate: step 5/5. Functionally, the beta subunit is responsible for the synthesis of L-tryptophan from indole and L-serine. The polypeptide is Tryptophan synthase beta chain (Methanococcus aeolicus (strain ATCC BAA-1280 / DSM 17508 / OCM 812 / Nankai-3)).